The sequence spans 465 residues: Deoxyguanosinetriphosphate triphosphohydrolase-like protein (465 aa).

The disordered stretch occupies residues 1–22 (MKWDKLLNDKRRRESGVTRSKN). The region spanning 63–252 (RLTHSMEVST…LEVADDIAYL (190 aa)) is the HD domain.

This sequence belongs to the dGTPase family. Type 3 subfamily.

The chain is Deoxyguanosinetriphosphate triphosphohydrolase-like protein from Listeria innocua serovar 6a (strain ATCC BAA-680 / CLIP 11262).